Here is a 530-residue protein sequence, read N- to C-terminus: Putative ABC transporter ATP-binding protein SSO1893 (530 aa).

ABC transporter domains follow at residues 6–243 (IRDL…LGLE) and 282–516 (ILFA…EPPL). ATP is bound by residues 38–45 (GRSGSGKS) and 314–321 (GKNGSGKT).

This sequence belongs to the ABC transporter superfamily.

The protein localises to the cell membrane. Its function is as follows. Probably part of an ABC transporter complex. Responsible for energy coupling to the transport system. The sequence is that of Putative ABC transporter ATP-binding protein SSO1893 from Saccharolobus solfataricus (strain ATCC 35092 / DSM 1617 / JCM 11322 / P2) (Sulfolobus solfataricus).